The chain runs to 156 residues: SsrA-binding protein (156 aa).

The protein belongs to the SmpB family.

It localises to the cytoplasm. Its function is as follows. Required for rescue of stalled ribosomes mediated by trans-translation. Binds to transfer-messenger RNA (tmRNA), required for stable association of tmRNA with ribosomes. tmRNA and SmpB together mimic tRNA shape, replacing the anticodon stem-loop with SmpB. tmRNA is encoded by the ssrA gene; the 2 termini fold to resemble tRNA(Ala) and it encodes a 'tag peptide', a short internal open reading frame. During trans-translation Ala-aminoacylated tmRNA acts like a tRNA, entering the A-site of stalled ribosomes, displacing the stalled mRNA. The ribosome then switches to translate the ORF on the tmRNA; the nascent peptide is terminated with the 'tag peptide' encoded by the tmRNA and targeted for degradation. The ribosome is freed to recommence translation, which seems to be the essential function of trans-translation. The sequence is that of SsrA-binding protein from Shouchella clausii (strain KSM-K16) (Alkalihalobacillus clausii).